We begin with the raw amino-acid sequence, 391 residues long: Thioredoxin-interacting protein (391 aa).

Residue Lys212 forms a Glycyl lysine isopeptide (Lys-Gly) (interchain with G-Cter in ubiquitin) linkage. Residue Ser361 is modified to Phosphoserine.

The protein belongs to the arrestin family. Homodimer; disulfide-linked. Interacts with TXN/thioredoxin through its redox-active site. Interacts with transcriptional repressors ZBTB16, ZBTB32 and HDAC1. Interacts with DDIT4. In terms of processing, ubiquitinated; undergoes heterotypic 'Lys-48'-/'Lys-63'-branched polyubiquitination catalyzed by ITCH and UBR5 resulting in proteasomal degradation. Deubiquitinated by USP5, leading to TXNIP stabilization.

It localises to the cytoplasm. It is found in the nucleus. Functionally, may act as an oxidative stress mediator by inhibiting thioredoxin activity or by limiting its bioavailability. Interacts with COPS5 and restores COPS5-induced suppression of CDKN1B stability, blocking the COPS5-mediated translocation of CDKN1B from the nucleus to the cytoplasm. Functions as a transcriptional repressor, possibly by acting as a bridge molecule between transcription factors and corepressor complexes, and over-expression will induce G0/G1 cell cycle arrest. Required for the maturation of natural killer cells. Acts as a suppressor of tumor cell growth. Inhibits the proteasomal degradation of DDIT4, and thereby contributes to the inhibition of the mammalian target of rapamycin complex 1 (mTORC1). The sequence is that of Thioredoxin-interacting protein (TXNIP) from Homo sapiens (Human).